A 369-amino-acid polypeptide reads, in one-letter code: Chorismate synthase (369 aa).

Positions 48 and 54 each coordinate NADP(+). FMN is bound by residues 125–127 (RSS), 238–239 (NA), Gly-283, 298–302 (KPTSS), and Arg-324.

It belongs to the chorismate synthase family. Homotetramer. FMNH2 serves as cofactor.

The enzyme catalyses 5-O-(1-carboxyvinyl)-3-phosphoshikimate = chorismate + phosphate. Its pathway is metabolic intermediate biosynthesis; chorismate biosynthesis; chorismate from D-erythrose 4-phosphate and phosphoenolpyruvate: step 7/7. Catalyzes the anti-1,4-elimination of the C-3 phosphate and the C-6 proR hydrogen from 5-enolpyruvylshikimate-3-phosphate (EPSP) to yield chorismate, which is the branch point compound that serves as the starting substrate for the three terminal pathways of aromatic amino acid biosynthesis. This reaction introduces a second double bond into the aromatic ring system. The sequence is that of Chorismate synthase from Acidiphilium cryptum (strain JF-5).